A 321-amino-acid polypeptide reads, in one-letter code: Phospho-N-acetylmuramoyl-pentapeptide-transferase (321 aa).

A run of 10 helical transmembrane segments spans residues 6–26, 53–73, 77–97, 121–141, 144–164, 175–195, 200–220, 226–246, 251–271, and 301–321; these read MLIPMVSAFAITIMFMPLFIG, TMGGLIFIAAIIVSAIWVGIW, LTLSVWVSLFILVLYGLLGFY, ILGAIIFLIAYFHEGFDHTLW, IIGNVSAAWFYVLFVIVWLVG, LDGLVAGQTTISFGTYAIIAA, TDVLIVCLVTIGAMLGFLMFN, IFMGDLGSLALGGMLAVVAIL, WSLLLIGIIYVTETASVILQV, and IDLTFWLVGLIGSGIYLAFFL.

This sequence belongs to the glycosyltransferase 4 family. MraY subfamily. Mg(2+) serves as cofactor.

It is found in the cell membrane. The enzyme catalyses UDP-N-acetyl-alpha-D-muramoyl-L-alanyl-gamma-D-glutamyl-L-lysyl-D-alanyl-D-alanine + di-trans,octa-cis-undecaprenyl phosphate = Mur2Ac(oyl-L-Ala-gamma-D-Glu-L-Lys-D-Ala-D-Ala)-di-trans,octa-cis-undecaprenyl diphosphate + UMP. Its pathway is cell wall biogenesis; peptidoglycan biosynthesis. In terms of biological role, catalyzes the initial step of the lipid cycle reactions in the biosynthesis of the cell wall peptidoglycan: transfers peptidoglycan precursor phospho-MurNAc-pentapeptide from UDP-MurNAc-pentapeptide onto the lipid carrier undecaprenyl phosphate, yielding undecaprenyl-pyrophosphoryl-MurNAc-pentapeptide, known as lipid I. This chain is Phospho-N-acetylmuramoyl-pentapeptide-transferase, found in Lacticaseibacillus paracasei (strain ATCC 334 / BCRC 17002 / CCUG 31169 / CIP 107868 / KCTC 3260 / NRRL B-441) (Lactobacillus paracasei).